A 320-amino-acid polypeptide reads, in one-letter code: Tetraacyldisaccharide 4'-kinase (320 aa).

An ATP-binding site is contributed by 53–60; sequence SVGGNGKT.

The protein belongs to the LpxK family.

The enzyme catalyses a lipid A disaccharide + ATP = a lipid IVA + ADP + H(+). It participates in glycolipid biosynthesis; lipid IV(A) biosynthesis; lipid IV(A) from (3R)-3-hydroxytetradecanoyl-[acyl-carrier-protein] and UDP-N-acetyl-alpha-D-glucosamine: step 6/6. In terms of biological role, transfers the gamma-phosphate of ATP to the 4'-position of a tetraacyldisaccharide 1-phosphate intermediate (termed DS-1-P) to form tetraacyldisaccharide 1,4'-bis-phosphate (lipid IVA). This chain is Tetraacyldisaccharide 4'-kinase, found in Psychromonas ingrahamii (strain DSM 17664 / CCUG 51855 / 37).